We begin with the raw amino-acid sequence, 31 residues long: Histone H1.3 (31 aa).

Belongs to the histone H1/H5 family.

Its subcellular location is the nucleus. It localises to the chromosome. Histones H1 are necessary for the condensation of nucleosome chains into higher-order structures. This chain is Histone H1.3, found in Triticum aestivum (Wheat).